Here is a 36-residue protein sequence, read N- to C-terminus: Protein YnfP (36 aa).

In Escherichia coli (strain K12), this protein is Protein YnfP.